Reading from the N-terminus, the 573-residue chain is Dihydroxy-acid dehydratase (573 aa).

Basic and acidic residues predominate over residues methionine 1–alanine 14. Positions methionine 1–arginine 21 are disordered. [2Fe-2S] cluster is bound at residue cysteine 55. Aspartate 87 is a Mg(2+) binding site. Cysteine 128 provides a ligand contact to [2Fe-2S] cluster. Mg(2+) contacts are provided by aspartate 129 and lysine 130. An N6-carboxylysine modification is found at lysine 130. Cysteine 200 serves as a coordination point for [2Fe-2S] cluster. Residue glutamate 450 participates in Mg(2+) binding. The active-site Proton acceptor is serine 476.

It belongs to the IlvD/Edd family. Homodimer. Requires [2Fe-2S] cluster as cofactor. It depends on Mg(2+) as a cofactor.

The enzyme catalyses (2R)-2,3-dihydroxy-3-methylbutanoate = 3-methyl-2-oxobutanoate + H2O. It catalyses the reaction (2R,3R)-2,3-dihydroxy-3-methylpentanoate = (S)-3-methyl-2-oxopentanoate + H2O. It functions in the pathway amino-acid biosynthesis; L-isoleucine biosynthesis; L-isoleucine from 2-oxobutanoate: step 3/4. The protein operates within amino-acid biosynthesis; L-valine biosynthesis; L-valine from pyruvate: step 3/4. In terms of biological role, functions in the biosynthesis of branched-chain amino acids. Catalyzes the dehydration of (2R,3R)-2,3-dihydroxy-3-methylpentanoate (2,3-dihydroxy-3-methylvalerate) into 2-oxo-3-methylpentanoate (2-oxo-3-methylvalerate) and of (2R)-2,3-dihydroxy-3-methylbutanoate (2,3-dihydroxyisovalerate) into 2-oxo-3-methylbutanoate (2-oxoisovalerate), the penultimate precursor to L-isoleucine and L-valine, respectively. The protein is Dihydroxy-acid dehydratase of Koribacter versatilis (strain Ellin345).